Here is a 404-residue protein sequence, read N- to C-terminus: Argininosuccinate synthase (404 aa).

ATP is bound at residue 9–17 (AYSGGLDTS). Residue Y86 participates in L-citrulline binding. G116 contacts ATP. Residues T118, N122, and D123 each contribute to the L-aspartate site. N122 lines the L-citrulline pocket. L-citrulline is bound by residues R126, S174, S183, E259, and Y271.

This sequence belongs to the argininosuccinate synthase family. Type 1 subfamily. Homotetramer.

It localises to the cytoplasm. The catalysed reaction is L-citrulline + L-aspartate + ATP = 2-(N(omega)-L-arginino)succinate + AMP + diphosphate + H(+). It functions in the pathway amino-acid biosynthesis; L-arginine biosynthesis; L-arginine from L-ornithine and carbamoyl phosphate: step 2/3. In Listeria welshimeri serovar 6b (strain ATCC 35897 / DSM 20650 / CCUG 15529 / CIP 8149 / NCTC 11857 / SLCC 5334 / V8), this protein is Argininosuccinate synthase.